Here is a 564-residue protein sequence, read N- to C-terminus: MRRIGAITALSLPVLLSLLYSCGTGGSASKEEILSKKEHNPEPNIPLECYTDTGVVKLGKAIANPCYVCHTKALTPYENEVDDFDLQLVYDFPEEIKEMGNPWLNAIKPELTIGSVPMPSDEEIKTWIRQDNWSKAYAEKGKGELVYFPDIPPIYKYENGSYELINVDKEGFVRDPETGEYTGWRVFKWKPFPGFFPTNGRIDSTFIRLPEKFRKKNGEFDLNLYKKNLAILECAMKGVAPGETCSGTEVGDFIMPFRYEGDASDVEVVVYQYPPGTEFAHPLYYLDPENTLSFKSLRIKEMRYMKKLAYADTRTGTGEEEEEEGTFFWDKGRFFNDSGYWEMRAFIEDKNGYLRPQSPEESKFCIACHGGIGGTVDGTFTLWRKIPGEEGWKEQDYKNIKDYRYKAITCENLDSLEMGEEVKKALEAYCSKVGESPGEYTVYFALTAGGDHFRSNYEILQDISVDGKVDLELLYNPEKIKFIDNSGFIKPELFFPEPERAYGIDKQYYRIVKAQAFIYGRDVFEKAFGISSGGNSLEELDNLESTGVKESGIWNFVKNFLSSE.

The first 21 residues, 1-21 (MRRIGAITALSLPVLLSLLYS), serve as a signal peptide directing secretion. Residue Cys-22 is the site of N-palmitoyl cysteine attachment. Residue Cys-22 is the site of S-diacylglycerol cysteine attachment.

The protein resides in the cell membrane. This is an uncharacterized protein from Aquifex aeolicus (strain VF5).